The sequence spans 311 residues: Chalcone synthase 4 (311 aa).

Cys164 is an active-site residue.

It belongs to the thiolase-like superfamily. Chalcone/stilbene synthases family.

It catalyses the reaction (E)-4-coumaroyl-CoA + 3 malonyl-CoA + 3 H(+) = 2',4,4',6'-tetrahydroxychalcone + 3 CO2 + 4 CoA. It participates in secondary metabolite biosynthesis; flavonoid biosynthesis. Functionally, the primary product of this enzyme is 4,2',4',6'-tetrahydroxychalcone (also termed naringenin-chalcone or chalcone) which can under specific conditions spontaneously isomerize into naringenin. This chain is Chalcone synthase 4 (CHS4), found in Trifolium subterraneum (Subterranean clover).